The following is a 355-amino-acid chain: Probable GTP 3',8-cyclase (355 aa).

The Radical SAM core domain occupies 5-233 (AYGRPLKDLR…GRLHNRRVYR (229 aa)). R14 is a GTP binding site. C21, C25, and C28 together coordinate [4Fe-4S] cluster. K69 is a GTP binding site. G73 is an S-adenosyl-L-methionine binding site. Position 97 (T97) interacts with GTP. Position 121 (S121) interacts with S-adenosyl-L-methionine. Position 157 (K157) interacts with GTP. 2 residues coordinate [4Fe-4S] cluster: C252 and C255. 257–259 (RVR) is a GTP binding site. C269 contributes to the [4Fe-4S] cluster binding site.

The protein belongs to the radical SAM superfamily. MoaA family. Requires [4Fe-4S] cluster as cofactor.

The enzyme catalyses GTP + AH2 + S-adenosyl-L-methionine = (8S)-3',8-cyclo-7,8-dihydroguanosine 5'-triphosphate + 5'-deoxyadenosine + L-methionine + A + H(+). The protein operates within cofactor biosynthesis; molybdopterin biosynthesis. Functionally, catalyzes the cyclization of GTP to (8S)-3',8-cyclo-7,8-dihydroguanosine 5'-triphosphate. The polypeptide is Probable GTP 3',8-cyclase (Aeropyrum pernix (strain ATCC 700893 / DSM 11879 / JCM 9820 / NBRC 100138 / K1)).